The chain runs to 542 residues: Phosphoacetylglucosamine mutase 2 (542 aa).

The active-site Phosphoserine intermediate is serine 77. Mg(2+) is bound at residue serine 77. Phosphoserine is present on residues serine 77 and serine 82. Mg(2+) is bound by residues aspartate 292, aspartate 294, and aspartate 296. Substrate-binding positions include 385–387, 510–514, and arginine 519; these read EAN and RSSGT.

It belongs to the phosphohexose mutase family. Requires Mg(2+) as cofactor.

It is found in the cytoplasm. The protein localises to the nucleus. The enzyme catalyses N-acetyl-alpha-D-glucosamine 1-phosphate = N-acetyl-D-glucosamine 6-phosphate. It functions in the pathway nucleotide-sugar biosynthesis; UDP-N-acetyl-alpha-D-glucosamine biosynthesis; N-acetyl-alpha-D-glucosamine 1-phosphate from alpha-D-glucosamine 6-phosphate (route I): step 2/2. Its function is as follows. Catalyzes the conversion of GlcNAc-6-P into GlcNAc-1-P during the synthesis of uridine diphosphate/UDP-GlcNAc, which is a biosynthetic precursor of chitin and also supplies the amino sugars for N-linked oligosaccharides of glycoproteins. The sequence is that of Phosphoacetylglucosamine mutase 2 from Schizosaccharomyces pombe (strain 972 / ATCC 24843) (Fission yeast).